Here is a 375-residue protein sequence, read N- to C-terminus: V-type proton ATPase subunit C (375 aa).

This sequence belongs to the V-ATPase C subunit family. V-ATPase is a heteromultimeric enzyme composed of a peripheral catalytic V1 complex (components A to H) attached to an integral membrane V0 proton pore complex (components: a, c, c'', d and e). In terms of processing, phosphorylated on Ser/Thr residues by WNK8.

The protein localises to the vacuole membrane. Subunit of the peripheral V1 complex of vacuolar ATPase. Subunit C is necessary for the assembly of the catalytic sector of the enzyme and is likely to have a specific function in its catalytic activity. V-ATPase is responsible for acidifying a variety of intracellular compartments in eukaryotic cells. This chain is V-type proton ATPase subunit C (VHA-C), found in Arabidopsis thaliana (Mouse-ear cress).